Reading from the N-terminus, the 170-residue chain is tRNA-splicing endonuclease (170 aa).

Active-site residues include Tyr110, His116, and Lys147.

This sequence belongs to the tRNA-intron endonuclease family. Archaeal short subfamily. In terms of assembly, homotetramer; although the tetramer contains four active sites, only two participate in the cleavage. Therefore, it should be considered as a dimer of dimers.

It catalyses the reaction pretRNA = a 3'-half-tRNA molecule with a 5'-OH end + a 5'-half-tRNA molecule with a 2',3'-cyclic phosphate end + an intron with a 2',3'-cyclic phosphate and a 5'-hydroxyl terminus.. In terms of biological role, endonuclease that removes tRNA introns. Cleaves pre-tRNA at the 5'- and 3'-splice sites to release the intron. The products are an intron and two tRNA half-molecules bearing 2',3' cyclic phosphate and 5'-OH termini. Recognizes a pseudosymmetric substrate in which 2 bulged loops of 3 bases are separated by a stem of 4 bp. This Pyrococcus abyssi (strain GE5 / Orsay) protein is tRNA-splicing endonuclease.